Reading from the N-terminus, the 153-residue chain is Transcriptional repressor NrdR (153 aa).

Residues 3-34 fold into a zinc finger; the sequence is CPFCGYEDTRVLDSRELSEGRAIRRRRECPQC. The 91-residue stretch at 49-139 folds into the ATP-cone domain; that stretch reads ITVIKKDGRR…VYKDFREIDQ (91 aa).

It belongs to the NrdR family. The cofactor is Zn(2+).

Negatively regulates transcription of bacterial ribonucleotide reductase nrd genes and operons by binding to NrdR-boxes. The polypeptide is Transcriptional repressor NrdR (Fervidobacterium nodosum (strain ATCC 35602 / DSM 5306 / Rt17-B1)).